Consider the following 205-residue polypeptide: GTP cyclohydrolase-2 (205 aa).

49 to 53 (RVHSE) serves as a coordination point for GTP. C54, C65, and C67 together coordinate Zn(2+). Residues Q70, 92–94 (EGR), and T114 each bind GTP. D126 functions as the Proton acceptor in the catalytic mechanism. R128 (nucleophile) is an active-site residue. GTP is bound by residues T149 and K154.

This sequence belongs to the GTP cyclohydrolase II family. The cofactor is Zn(2+).

It catalyses the reaction GTP + 4 H2O = 2,5-diamino-6-hydroxy-4-(5-phosphoribosylamino)-pyrimidine + formate + 2 phosphate + 3 H(+). It functions in the pathway cofactor biosynthesis; riboflavin biosynthesis; 5-amino-6-(D-ribitylamino)uracil from GTP: step 1/4. Catalyzes the conversion of GTP to 2,5-diamino-6-ribosylamino-4(3H)-pyrimidinone 5'-phosphate (DARP), formate and pyrophosphate. This chain is GTP cyclohydrolase-2, found in Pseudomonas fluorescens (strain SBW25).